A 531-amino-acid chain; its full sequence is Tryptophan 6-halogenase ThaL (531 aa).

The FAD site is built by glycine 13, threonine 15, alanine 16, alanine 39, isoleucine 42, isoleucine 45, valine 47, and alanine 50. Lysine 79 is a catalytic residue. Proline 111 serves as a coordination point for L-tryptophan. FAD contacts are provided by methionine 198 and leucine 349. Chloride is bound by residues serine 360 and glycine 361. Isoleucine 362 is a binding site for FAD. Positions 454, 455, 461, and 465 each coordinate L-tryptophan.

It belongs to the flavin-dependent halogenase family. Bacterial tryptophan halogenase subfamily. Homodimer. Monomer in solution.

It carries out the reaction L-tryptophan + FADH2 + chloride + O2 = 6-chloro-L-tryptophan + FAD + 2 H2O. It catalyses the reaction D-tryptophan + FADH2 + chloride + O2 = 6-chloro-D-tryptophan + FAD + 2 H2O. Involved in the biosynthesis of thienodolin, a plant growth-regulating compound. Catalyzes the chlorination of tryptophan (Trp) at C6 position to yield 6-chloro-tryptophan. It is also able to use bromide ions to generate monobrominated Trp. In vitro, accepts a wide range of amides and peptides carrying either L- or D-Trp at the N-terminus. The protein is Tryptophan 6-halogenase ThaL of Streptomyces albogriseolus.